Here is an 899-residue protein sequence, read N- to C-terminus: Periodic tryptophan protein 2 homolog (899 aa).

WD repeat units follow at residues 9–52 (NLLG…TLPF), 53–92 (SHRK…VLYH), 94–132 (SFKA…DANA), 149–188 (QHFD…GFTP), 193–232 (GHRQ…GQDE), 252–291 (QNSA…MIHT), 294–334 (ISQN…YILK), 337–376 (GHFD…CIVT), 379–418 (EHTS…NFRT), 422–464 (PERL…DRLS), 465–504 (GHEG…QTSE), 507–546 (QLNS…QQAG), and 569–608 (AGTK…LLKK). The tract at residues 639–668 (DEQGEASDFEDRIDRSLPGSKRGDPSARRK) is disordered. Residues 647–668 (FEDRIDRSLPGSKRGDPSARRK) show a composition bias toward basic and acidic residues. The stretch at 669–709 (NPEVRVNGVAFSPNGSAFCAASTEGLLIYSLDTTIQFDPFD) is one WD 14 repeat. Residues 866–899 (TGSDEQPGAGGMSLNDVMQQDEGNASEDEWIGLV) form a disordered region. The span at 889–899 (NASEDEWIGLV) shows a compositional bias: acidic residues.

The protein belongs to the WD repeat PWP2 family.

The polypeptide is Periodic tryptophan protein 2 homolog (Neurospora crassa (strain ATCC 24698 / 74-OR23-1A / CBS 708.71 / DSM 1257 / FGSC 987)).